A 511-amino-acid polypeptide reads, in one-letter code: Inner membrane ABC transporter permease protein YnjC (511 aa).

The Cytoplasmic segment spans residues 1 to 8 (MATPLRYA). Residues 9-29 (LIFLLWAMVAVIYAPLIPAAL) form a helical membrane-spanning segment. Topologically, residues 30-62 (TLISPALSLTHWQALFADPQLPQALLATLVSTT) are periplasmic. The ABC transmembrane type-1 1 domain occupies 54–255 (LLATLVSTTI…MLLLAAYVLL (202 aa)). Residues 63 to 83 (IAAVGALLIALLVIVALWPGP) form a helical membrane-spanning segment. Residues 84 to 91 (KWQRMCAR) lie on the Cytoplasmic side of the membrane. A helical membrane pass occupies residues 92–112 (LPWLLAIPHVAFATSALLLFA). The Periplasmic portion of the chain corresponds to 113–130 (DGGLLYDYFPYFTPPMDR). The chain crosses the membrane as a helical span at residues 131–151 (FGIGLGLTLAVKESAFLLWIL). Topologically, residues 152-189 (AAVLSEKWLLQQVIVLDSLGYSRWQCLNWLLLPSVAPA) are cytoplasmic. The chain crosses the membrane as a helical span at residues 190 to 210 (LAMAMLAIVAWSLSVVDVAII). Residues 211–239 (LGPGNPPTLAVISWQWLTQGDIDQQTKGA) lie on the Periplasmic side of the membrane. Residues 240–260 (LASLLLMLLLAAYVLLSYLLW) traverse the membrane as a helical segment. Over 261–284 (RSWRRTIPRVDGVRKPATPLLPGN) the chain is Cytoplasmic. The chain crosses the membrane as a helical span at residues 285–305 (TLAIFLPLTGVLCVVLLAILA). Topologically, residues 306-318 (DQSTINSEALINS) are periplasmic. Residues 315 to 496 (LINSLTMGLV…LLPLIIFALT (182 aa)) enclose the ABC transmembrane type-1 2 domain. The helical transmembrane segment at 319 to 339 (LTMGLVATFIALLLLLLWLEW) threads the bilayer. The Cytoplasmic portion of the chain corresponds to 340–345 (GPQRRQ). The helical transmembrane segment at 346–366 (LWLWLPILLPALPLVAGQYTL) threads the bilayer. The Periplasmic portion of the chain corresponds to 367–374 (ALWLKLDG). The helical transmembrane segment at 375-395 (SWTAVVWGHLLWVMPWMLFIL) threads the bilayer. The Cytoplasmic segment spans residues 396–432 (QPAWQRIDSRLILIAQTLGWSRAKIFFYVKCPLMLRP). A helical membrane pass occupies residues 433-453 (VLIAFAVGFAVGIAQYMPTLW). Over 454–485 (LGAGRFPTLTTEAVALSSGGSNGILAAQALWQ) the chain is Periplasmic. The helical transmembrane segment at 486-506 (LLLPLIIFALTALVAKWVGYV) threads the bilayer. Residues 507-511 (RQGLR) lie on the Cytoplasmic side of the membrane.

Belongs to the binding-protein-dependent transport system permease family.

The protein resides in the cell inner membrane. Functionally, probably part of the binding-protein-dependent transport system YnjCD. Probably responsible for the translocation of the substrate across the membrane. The chain is Inner membrane ABC transporter permease protein YnjC (ynjC) from Escherichia coli (strain K12).